Here is a 296-residue protein sequence, read N- to C-terminus: Homoserine kinase (296 aa).

84 to 94 (PLARGLGSSSS) is an ATP binding site.

Belongs to the GHMP kinase family. Homoserine kinase subfamily.

It localises to the cytoplasm. The catalysed reaction is L-homoserine + ATP = O-phospho-L-homoserine + ADP + H(+). The protein operates within amino-acid biosynthesis; L-threonine biosynthesis; L-threonine from L-aspartate: step 4/5. Catalyzes the ATP-dependent phosphorylation of L-homoserine to L-homoserine phosphate. The polypeptide is Homoserine kinase (Lactococcus lactis subsp. lactis (strain IL1403) (Streptococcus lactis)).